Reading from the N-terminus, the 304-residue chain is Aspartate carbamoyltransferase catalytic subunit (304 aa).

Arg49 and Thr50 together coordinate carbamoyl phosphate. Lys77 lines the L-aspartate pocket. 3 residues coordinate carbamoyl phosphate: Arg99, His127, and Gln130. Residues Arg160 and Arg211 each contribute to the L-aspartate site. The carbamoyl phosphate site is built by Ala252 and Pro253.

The protein belongs to the aspartate/ornithine carbamoyltransferase superfamily. ATCase family. As to quaternary structure, heterododecamer (2C3:3R2) of six catalytic PyrB chains organized as two trimers (C3), and six regulatory PyrI chains organized as three dimers (R2).

It carries out the reaction carbamoyl phosphate + L-aspartate = N-carbamoyl-L-aspartate + phosphate + H(+). It participates in pyrimidine metabolism; UMP biosynthesis via de novo pathway; (S)-dihydroorotate from bicarbonate: step 2/3. In terms of biological role, catalyzes the condensation of carbamoyl phosphate and aspartate to form carbamoyl aspartate and inorganic phosphate, the committed step in the de novo pyrimidine nucleotide biosynthesis pathway. In Bacillus cereus (strain ZK / E33L), this protein is Aspartate carbamoyltransferase catalytic subunit.